Consider the following 588-residue polypeptide: UvrABC system protein C (588 aa).

Residues 12-89 (SKPGCYLYLN…IKKYRPKYNV (78 aa)) enclose the GIY-YIG domain. Residues 194 to 229 (NEVKTLLTNQMHKAAENLQFEEAQRIKEQIISLDFT) enclose the UVR domain.

It belongs to the UvrC family. Interacts with UvrB in an incision complex.

It localises to the cytoplasm. The UvrABC repair system catalyzes the recognition and processing of DNA lesions. UvrC both incises the 5' and 3' sides of the lesion. The N-terminal half is responsible for the 3' incision and the C-terminal half is responsible for the 5' incision. The polypeptide is UvrABC system protein C (Mesoplasma florum (strain ATCC 33453 / NBRC 100688 / NCTC 11704 / L1) (Acholeplasma florum)).